A 123-amino-acid chain; its full sequence is Small ribosomal subunit protein uS12cz/uS12cy (123 aa).

The protein belongs to the universal ribosomal protein uS12 family. As to quaternary structure, part of the 30S ribosomal subunit.

Its subcellular location is the plastid. The protein resides in the chloroplast. In terms of biological role, with S4 and S5 plays an important role in translational accuracy. Located at the interface of the 30S and 50S subunits. This is Small ribosomal subunit protein uS12cz/uS12cy (rps12-A) from Phaseolus vulgaris (Kidney bean).